We begin with the raw amino-acid sequence, 224 residues long: Putative O-methyltransferase MT1258 (224 aa).

The segment covering M1–M10 has biased composition (basic and acidic residues). Positions M1–S21 are disordered. S-adenosyl-L-methionine is bound by residues V51, E73, G75–T76, S81, D99, and I100. D147 lines the substrate pocket. D149 is an S-adenosyl-L-methionine binding site.

It belongs to the class I-like SAM-binding methyltransferase superfamily. Cation-dependent O-methyltransferase family.

This Mycobacterium tuberculosis (strain CDC 1551 / Oshkosh) protein is Putative O-methyltransferase MT1258.